The chain runs to 495 residues: Serine/threonine protein phosphatase 2A 57 kDa regulatory subunit B' alpha isoform (495 aa).

Residues 1–13 (MFKKIMKGANRKA) show a composition bias toward basic residues. Disordered stretches follow at residues 1 to 61 (MFKK…AATT) and 462 to 495 (QAKS…MITS). Residues 49–61 (VPSSPNSMAAATT) are compositionally biased toward polar residues.

Belongs to the phosphatase 2A regulatory subunit B56 family. In terms of assembly, PP2A consists of a common heteromeric enzyme, composed of a catalytic subunit (subunits C), a constant regulatory subunit (subunit A), and a variety of regulatory subunits such as subunits B (the R2/B/PR55/B55, R3/B''/PR72/PR130/PR59 and R5/B'/B56 families). Interacts with BZR1. Interacts with BRI1. Interacts with SRK2E/OST1. Expressed ubiquitously, higher levels in leaves.

The protein localises to the nucleus. It is found in the cytoplasm. Functionally, the B regulatory subunit may modulate substrate selectivity and catalytic activity, and may also direct the localization of the catalytic enzyme to a particular subcellular compartment. Required for the formation of the PP2A holoenzyme that positively regulates brassinosteroid signaling by dephosphorylating and activating BZR1. This Arabidopsis thaliana (Mouse-ear cress) protein is Serine/threonine protein phosphatase 2A 57 kDa regulatory subunit B' alpha isoform (B'ALPHA).